A 147-amino-acid chain; its full sequence is Auxin-responsive protein SAUR41 (147 aa).

The protein belongs to the ARG7 family. Specifically expressed in the quiescent center and cortex or endodermis initials of root stem niches. Expressed in vascular tissues from hypocotyls, petioles and cotyledons.

The protein localises to the cytoplasm. In terms of biological role, plays a role in the regulation of cell expansion, root meristem patterning and auxin transport. This Arabidopsis thaliana (Mouse-ear cress) protein is Auxin-responsive protein SAUR41.